The primary structure comprises 138 residues: Proofreading thioesterase EntH (138 aa).

The Nucleophile or proton acceptor role is filled by Glu-64.

It belongs to the thioesterase PaaI family. In terms of assembly, homotetramer. Dimer of dimers. Interacts specifically with the aryl carrier protein (ArCP) domain of EntB.

It localises to the cytoplasm. It functions in the pathway siderophore biosynthesis; enterobactin biosynthesis. Required for optimal enterobactin synthesis. Acts as a proofreading enzyme that prevents EntB misacylation by hydrolyzing the thioester bound existing between EntB and wrongly charged molecules. This Citrobacter rodentium (strain ICC168) (Citrobacter freundii biotype 4280) protein is Proofreading thioesterase EntH.